The primary structure comprises 355 residues: Elongation factor Ts (355 aa).

The interval 82-85 (TDFV) is involved in Mg(2+) ion dislocation from EF-Tu.

Belongs to the EF-Ts family.

The protein localises to the cytoplasm. Its function is as follows. Associates with the EF-Tu.GDP complex and induces the exchange of GDP to GTP. It remains bound to the aminoacyl-tRNA.EF-Tu.GTP complex up to the GTP hydrolysis stage on the ribosome. The sequence is that of Elongation factor Ts from Wolinella succinogenes (strain ATCC 29543 / DSM 1740 / CCUG 13145 / JCM 31913 / LMG 7466 / NCTC 11488 / FDC 602W) (Vibrio succinogenes).